A 296-amino-acid chain; its full sequence is Small ribosomal subunit biogenesis GTPase RsgA (296 aa).

One can recognise a CP-type G domain in the interval 65 to 226 (TNELIRPPIS…VADTPGFSSL (162 aa)). Residues 114–117 (TKMD) and 169–177 (GQSGVGKSS) each bind GTP. Zn(2+)-binding residues include Cys-250, Cys-255, His-257, and Cys-263.

The protein belongs to the TRAFAC class YlqF/YawG GTPase family. RsgA subfamily. In terms of assembly, monomer. Associates with 30S ribosomal subunit, binds 16S rRNA. The cofactor is Zn(2+).

The protein resides in the cytoplasm. One of several proteins that assist in the late maturation steps of the functional core of the 30S ribosomal subunit. Helps release RbfA from mature subunits. May play a role in the assembly of ribosomal proteins into the subunit. Circularly permuted GTPase that catalyzes slow GTP hydrolysis, GTPase activity is stimulated by the 30S ribosomal subunit. This is Small ribosomal subunit biogenesis GTPase RsgA from Bacillus velezensis (strain DSM 23117 / BGSC 10A6 / LMG 26770 / FZB42) (Bacillus amyloliquefaciens subsp. plantarum).